A 207-amino-acid polypeptide reads, in one-letter code: Uracil phosphoribosyltransferase (207 aa).

Residues Arg-77, Arg-102, and 129–137 (DPMLATGGS) contribute to the 5-phospho-alpha-D-ribose 1-diphosphate site. Residues Ile-192 and 197–199 (GDA) each bind uracil. Asp-198 contributes to the 5-phospho-alpha-D-ribose 1-diphosphate binding site.

This sequence belongs to the UPRTase family. It depends on Mg(2+) as a cofactor.

It catalyses the reaction UMP + diphosphate = 5-phospho-alpha-D-ribose 1-diphosphate + uracil. Its pathway is pyrimidine metabolism; UMP biosynthesis via salvage pathway; UMP from uracil: step 1/1. With respect to regulation, allosterically activated by GTP. In terms of biological role, catalyzes the conversion of uracil and 5-phospho-alpha-D-ribose 1-diphosphate (PRPP) to UMP and diphosphate. This chain is Uracil phosphoribosyltransferase, found in Nocardia farcinica (strain IFM 10152).